Here is a 338-residue protein sequence, read N- to C-terminus: Flap endonuclease 1 (338 aa).

An N-domain region spans residues 1–98 (MGVNLSSILI…ETLRERSLIK (98 aa)). Mg(2+)-binding residues include Asp27, Asp80, Glu152, Glu154, Asp173, Asp175, and Asp236. Positions 116–257 (KIRSLSSRIN…TALSLIKKYN (142 aa)) are I-domain. The tract at residues 330–338 (HQSSLDRFF) is interaction with PCNA.

Belongs to the XPG/RAD2 endonuclease family. FEN1 subfamily. In terms of assembly, interacts with PCNA. PCNA stimulates the nuclease activity without altering cleavage specificity. The cofactor is Mg(2+).

In terms of biological role, structure-specific nuclease with 5'-flap endonuclease and 5'-3' exonuclease activities involved in DNA replication and repair. During DNA replication, cleaves the 5'-overhanging flap structure that is generated by displacement synthesis when DNA polymerase encounters the 5'-end of a downstream Okazaki fragment. Binds the unpaired 3'-DNA end and kinks the DNA to facilitate 5' cleavage specificity. Cleaves one nucleotide into the double-stranded DNA from the junction in flap DNA, leaving a nick for ligation. Also involved in the base excision repair (BER) pathway. Acts as a genome stabilization factor that prevents flaps from equilibrating into structures that lead to duplications and deletions. Also possesses 5'-3' exonuclease activity on nicked or gapped double-stranded DNA. This Picrophilus torridus (strain ATCC 700027 / DSM 9790 / JCM 10055 / NBRC 100828 / KAW 2/3) protein is Flap endonuclease 1.